A 442-amino-acid chain; its full sequence is Methylenetetrahydrofolate--tRNA-(uracil-5-)-methyltransferase TrmFO 1 (442 aa).

9–14 serves as a coordination point for FAD; sequence GAGLAG.

Belongs to the MnmG family. TrmFO subfamily. The cofactor is FAD.

It localises to the cytoplasm. The enzyme catalyses uridine(54) in tRNA + (6R)-5,10-methylene-5,6,7,8-tetrahydrofolate + NADH + H(+) = 5-methyluridine(54) in tRNA + (6S)-5,6,7,8-tetrahydrofolate + NAD(+). The catalysed reaction is uridine(54) in tRNA + (6R)-5,10-methylene-5,6,7,8-tetrahydrofolate + NADPH + H(+) = 5-methyluridine(54) in tRNA + (6S)-5,6,7,8-tetrahydrofolate + NADP(+). Catalyzes the folate-dependent formation of 5-methyl-uridine at position 54 (M-5-U54) in all tRNAs. This chain is Methylenetetrahydrofolate--tRNA-(uracil-5-)-methyltransferase TrmFO 1, found in Mesoplasma florum (strain ATCC 33453 / NBRC 100688 / NCTC 11704 / L1) (Acholeplasma florum).